Consider the following 131-residue polypeptide: Profilin-3 (131 aa).

A disulfide bridge connects residues Cys-13 and Cys-115. Positions 81-97 (AVIRGKKGSGGITIKKT) match the Involved in PIP2 interaction motif. Thr-111 is modified (phosphothreonine).

Belongs to the profilin family. Occurs in many kinds of cells as a complex with monomeric actin in a 1:1 ratio. Post-translationally, phosphorylated by MAP kinases.

Its subcellular location is the cytoplasm. The protein localises to the cytoskeleton. In terms of biological role, binds to actin and affects the structure of the cytoskeleton. At high concentrations, profilin prevents the polymerization of actin, whereas it enhances it at low concentrations. This is Profilin-3 from Olea europaea (Common olive).